The chain runs to 449 residues: Phosphoglucosamine mutase (449 aa).

The Phosphoserine intermediate role is filled by S100. Mg(2+) is bound by residues S100, D241, D243, and D245. S100 is modified (phosphoserine).

Belongs to the phosphohexose mutase family. The cofactor is Mg(2+). In terms of processing, activated by phosphorylation.

It catalyses the reaction alpha-D-glucosamine 1-phosphate = D-glucosamine 6-phosphate. In terms of biological role, catalyzes the conversion of glucosamine-6-phosphate to glucosamine-1-phosphate. This Clostridium botulinum (strain Kyoto / Type A2) protein is Phosphoglucosamine mutase.